We begin with the raw amino-acid sequence, 399 residues long: La protein 2 (399 aa).

The 104-residue stretch at 3–106 (SSFNEETAKK…GRGTKLSKPE (104 aa)) folds into the HTH La-type RNA-binding domain. Residues 115-192 (RTLAASPFEY…ADLVLIPKSD (78 aa)) form the RRM domain. The xRRM domain maps to 269 to 399 (SLCKDNTDQL…QPTKKARKEP (131 aa)). Positions 367–399 (AELEGGKEGHKKEKGKDECFENVQPTKKARKEP) are disordered. Residues 370–385 (EGGKEGHKKEKGKDEC) are compositionally biased toward basic and acidic residues.

As to expression, expressed ubiquitously (at protein level).

Its subcellular location is the nucleus. The protein resides in the nucleoplasm. It localises to the nucleolus. Its function is as follows. Binds to the 3' poly(U) terminus of nascent RNA polymerase III transcripts, protecting them from exonuclease digestion and facilitating their folding and maturation. The polypeptide is La protein 2 (LA2) (Arabidopsis thaliana (Mouse-ear cress)).